Reading from the N-terminus, the 159-residue chain is MALIILLVACLSVVSADDCSGKTDAWTSIKGPKTGGYWLKQTTKTGENECTYVKGTDFKENTKTATYTYGYKDASGKLTKTTGTATAKGSDIVVGSDTSTVIYTDGKTCDVVKHGGHTELWVHSSKTSGGYNNCCDKKFTETRGSTPANEVYKKCPGMP.

The signal sequence occupies residues M1 to A16. Intrachain disulfides connect C50-C155 and C109-C134.

The protein belongs to the calycin superfamily. Histamine-binding salivary protein family. Post-translationally, not glycosylated.

The protein resides in the secreted. The sequence is that of Allergen Arg r 1 from Argas reflexus (European pigeon tick).